The chain runs to 265 residues: Glutamate racemase (265 aa).

Residues 12–13 and 44–45 contribute to the substrate site; these read DS and YG. Residue cysteine 75 is the Proton donor/acceptor of the active site. Position 76-77 (76-77) interacts with substrate; sequence NT. Cysteine 186 functions as the Proton donor/acceptor in the catalytic mechanism. A substrate-binding site is contributed by 187 to 188; the sequence is TH.

It belongs to the aspartate/glutamate racemases family.

The enzyme catalyses L-glutamate = D-glutamate. It functions in the pathway cell wall biogenesis; peptidoglycan biosynthesis. Provides the (R)-glutamate required for cell wall biosynthesis. The polypeptide is Glutamate racemase (Pseudomonas entomophila (strain L48)).